The sequence spans 327 residues: MLTLPFEDPVIMDTQFGANFPRDCVGDLKGNKQEPFEKEETLSHVMDDDDSEKDEDEREDGQDENGLPRRRGPRKKKMTKARVDRVKVRRMEANARERNRMHGLNNALDSLRKVVPCYSKTQKLSKIETLRLAKNYIWALSEILSTGKRPDLLTFVQTLCKGLSQPTTNLVAGCLQLNARNFIPDQISGEASFSGRSPYESVYSTYHSPSVVTPSGPSVDAVKPFRSFNYCSSYESFYESVSPECGSPQFEGPLSPPINFNGIFSLKHEEPVEYGKSCHYGTRYCAVPPRASIGQSARGSSDLHFPYDIHLRGQFYPVQDELNTFHN.

The tract at residues 17–85 (GANFPRDCVG…KKMTKARVDR (69 aa)) is disordered. Positions 24-46 (CVGDLKGNKQEPFEKEETLSHVM) are enriched in basic and acidic residues. Residues 47–63 (DDDDSEKDEDEREDGQD) are compositionally biased toward acidic residues. The span at 68-80 (PRRRGPRKKKMTK) shows a compositional bias: basic residues. The Nuclear localization signal signature appears at 74-80 (RKKKMTK). Residues 88–140 (VRRMEANARERNRMHGLNNALDSLRKVVPCYSKTQKLSKIETLRLAKNYIWAL) form the bHLH domain.

As to quaternary structure, efficient DNA binding requires dimerization with another bHLH protein. Embryonic olfactory bulbs. In adult, expressed in brain, eye, intestine, muscle, ovary and skin.

It is found in the nucleus. Functionally, differentiation factor required for neurogenesis. Acts as an upstream activator of isl1. The protein is Neurogenic differentiation factor 6-A of Danio rerio (Zebrafish).